The sequence spans 301 residues: Mitochondrial import receptor subunit TOM40 homolog (301 aa).

The span at 1–19 (MATPTESELASPIPQTNPG) shows a compositional bias: polar residues. The tract at residues 1–20 (MATPTESELASPIPQTNPGS) is disordered.

It belongs to the Tom40 family. Forms part of the preprotein translocase complex of the outer mitochondrial membrane (TOM complex). Interacts with mitochondrial targeting sequences. As to expression, ubiquitously expressed, but highly expressed in the pharyngeal muscles, the nerve ring, the intestine, gonadal sheath and in the tail hypodermis.

The protein localises to the mitochondrion outer membrane. Functionally, channel-forming protein essential for import of protein precursors into mitochondria. Specifically required for nnt-1 accumulation in the mitochondria and may be involved in the secretion of daf-28/insulin from the mitochondria. Required for embryonic and larval development. This chain is Mitochondrial import receptor subunit TOM40 homolog, found in Caenorhabditis elegans.